We begin with the raw amino-acid sequence, 265 residues long: ATP synthase subunit a (265 aa).

A run of 5 helical transmembrane segments spans residues 25 to 45 (FWAV…LFLW), 88 to 108 (IAPL…MDLI), 142 to 162 (DLNT…IYSI), 207 to 227 (LFGN…IGFW), and 233 to 253 (FAWA…FMML).

It belongs to the ATPase A chain family. F-type ATPases have 2 components, CF(1) - the catalytic core - and CF(0) - the membrane proton channel. CF(1) has five subunits: alpha(3), beta(3), gamma(1), delta(1), epsilon(1). CF(0) has three main subunits: a(1), b(2) and c(9-12). The alpha and beta chains form an alternating ring which encloses part of the gamma chain. CF(1) is attached to CF(0) by a central stalk formed by the gamma and epsilon chains, while a peripheral stalk is formed by the delta and b chains.

Its subcellular location is the cell inner membrane. Functionally, key component of the proton channel; it plays a direct role in the translocation of protons across the membrane. The polypeptide is ATP synthase subunit a (Idiomarina loihiensis (strain ATCC BAA-735 / DSM 15497 / L2-TR)).